The chain runs to 361 residues: Cytochrome c peroxidase, mitochondrial (361 aa).

The transit peptide at M1–Y41 directs the protein to the mitochondrion. Catalysis depends on H122, which acts as the Proton acceptor. H245 lines the heme b pocket. W261 functions as the Tryptophan radical intermediate in the catalytic mechanism.

This sequence belongs to the peroxidase family. Cytochrome c peroxidase subfamily. Forms a one-to-one complex with cytochrome c. Heme b is required as a cofactor.

It localises to the mitochondrion matrix. Its subcellular location is the mitochondrion intermembrane space. It carries out the reaction 2 Fe(II)-[cytochrome c] + H2O2 + 2 H(+) = 2 Fe(III)-[cytochrome c] + 2 H2O. Its function is as follows. Destroys radicals which are normally produced within the cells and which are toxic to biological systems. This is Cytochrome c peroxidase, mitochondrial (ccp1) from Emericella nidulans (strain FGSC A4 / ATCC 38163 / CBS 112.46 / NRRL 194 / M139) (Aspergillus nidulans).